We begin with the raw amino-acid sequence, 277 residues long: Proteasome subunit beta type-7 (277 aa).

Positions Met-1–Gly-43 are cleaved as a propeptide — removed in mature form. Thr-44 serves as the catalytic Nucleophile.

Belongs to the peptidase T1B family. In terms of assembly, the 26S proteasome consists of a 20S proteasome core and two 19S regulatory subunits. The 20S proteasome core is a barrel-shaped complex made of 28 subunits that are arranged in four stacked rings. The two outer rings are each formed by seven alpha subunits, and the two inner rings are formed by seven beta subunits. The proteolytic activity is exerted by three beta-subunits PSMB5, PSMB6 and PSMB7.

Its subcellular location is the cytoplasm. The protein resides in the nucleus. It carries out the reaction Cleavage of peptide bonds with very broad specificity.. Component of the 20S core proteasome complex involved in the proteolytic degradation of most intracellular proteins. This complex plays numerous essential roles within the cell by associating with different regulatory particles. Associated with two 19S regulatory particles, forms the 26S proteasome and thus participates in the ATP-dependent degradation of ubiquitinated proteins. The 26S proteasome plays a key role in the maintenance of protein homeostasis by removing misfolded or damaged proteins that could impair cellular functions, and by removing proteins whose functions are no longer required. Associated with the PA200 or PA28, the 20S proteasome mediates ubiquitin-independent protein degradation. This type of proteolysis is required in several pathways including spermatogenesis (20S-PA200 complex) or generation of a subset of MHC class I-presented antigenic peptides (20S-PA28 complex). Within the 20S core complex, PSMB7 displays a trypsin-like activity. The polypeptide is Proteasome subunit beta type-7 (PSMB7) (Bos taurus (Bovine)).